Reading from the N-terminus, the 336-residue chain is Probable long-chain-alcohol O-fatty-acyltransferase 8 (336 aa).

The next 8 membrane-spanning stretches (helical) occupy residues 7-27 (SFVK…YIPS), 38-58 (SVLP…FTIF), 59-79 (SSTT…LFAF), 82-102 (GPLL…CLPI), 117-135 (WVFF…VHNY), 152-172 (LYLV…IILG), 228-248 (MGCW…YFYI), and 284-304 (PMLS…FLFF).

The protein belongs to the wax synthase family.

The protein resides in the membrane. The enzyme catalyses a long chain fatty alcohol + a fatty acyl-CoA = a wax ester + CoA. Catalyzes the final step in the synthesis of long-chain linear esters (waxes). The chain is Probable long-chain-alcohol O-fatty-acyltransferase 8 from Arabidopsis thaliana (Mouse-ear cress).